The following is a 44-amino-acid chain: F420-non-reducing hydrogenase vhu subunit U (44 aa).

Residues selenocysteine 20 and cysteine 23 each contribute to the Ni(2+) site. A non-standard amino acid (selenocysteine) is located at residue selenocysteine 20. A propeptide spans 27-44 (MIVEDAEGNVVFEIVNDE) (removed in mature form).

It belongs to the [NiFe]/[NiFeSe] hydrogenase large subunit family. As to quaternary structure, the F420-non-reducing hydrogenase vhu is composed of four subunits; VhuA, VhuD, VhuG and VhuU. It depends on Ni(2+) as a cofactor.

In Methanococcus voltae, this protein is F420-non-reducing hydrogenase vhu subunit U (vhuU).